We begin with the raw amino-acid sequence, 22 residues long: Caerin-3.4 (22 aa).

Residue Lys22 is modified to Lysine amide.

Expressed by the skin parotoid and/or rostral glands.

The protein localises to the secreted. Its function is as follows. Antibacterial peptide, that adopts an alpha helical conformation which can disrupt bacterial membranes. Each caerin displays a different antimicrobial specificity. In Ranoidea caerulea (Green tree frog), this protein is Caerin-3.4.